Reading from the N-terminus, the 679-residue chain is MTQVAKKILVTCALPYANGSIHLGHMLEHIQADIWVRYQRMRGHQIYFICADDAHGTPIMLKAQQLGIAPEEMINEMNLEHQTDFAGFGISYDNYHSTHSEENQQLSTLIYQRLKENGFIKSRTISQLFDPEKVMFLPDRFVKGSCPKCHSPDQYGDNCEVCGATYNPTDLINPKSAVSGTTPVMRESEHFFFDLPAFSEMMRAWTRSGALQEQVANKMQEWFESGLQEWDISRDAPYFGFEVPDAPGKYFYVWLDAPIGYMSAFQNLCQKRSDLRFDEFWDVDSKADLYHFIGKDIVYFHSLFWPAMLEGSHFRKPTNLFVHGYVTVNGAKMSKSRGTFIKASTYLAHLDAECLRYYYAAKLSSRIDDIDLNLEDFIQRVNADIVNKVVNLASRNAGFINKRFDGQLAATVADPALYATFVNAATSIGDAFSSRETSRAIREIMALADLANRYVDEQAPWVVAKQEGREADLQAICSMGIQLFRVLMTYLKPVLPSLAERAKAFLATPLDWDDLSAPLLSHRIRPFKALFSRIEAAQVDAVIEVSRLEAAAAGEPAAAPAGALAEAPIAPTINFDDFAKVDMRVALIKRAESVKGSDKLLKLTLDLGGTSRQVFSGIRAAYPDPQVLEGRLTIMVANLAPRKMRFGISEGMVMAAGPGGKDIFLLSPDAGALPGMPVK.

The 'HIGH' region signature appears at 15–25; the sequence is PYANGSIHLGH. Cys-146, Cys-149, Cys-159, and Cys-162 together coordinate Zn(2+). Residues 332 to 336 carry the 'KMSKS' region motif; it reads KMSKS. Lys-335 contributes to the ATP binding site. In terms of domain architecture, tRNA-binding spans 577-679; that stretch reads DFAKVDMRVA…AGALPGMPVK (103 aa).

Belongs to the class-I aminoacyl-tRNA synthetase family. MetG type 1 subfamily. In terms of assembly, homodimer. Requires Zn(2+) as cofactor.

The protein resides in the cytoplasm. It carries out the reaction tRNA(Met) + L-methionine + ATP = L-methionyl-tRNA(Met) + AMP + diphosphate. Its function is as follows. Is required not only for elongation of protein synthesis but also for the initiation of all mRNA translation through initiator tRNA(fMet) aminoacylation. In Sodalis glossinidius (strain morsitans), this protein is Methionine--tRNA ligase.